Consider the following 464-residue polypeptide: Glutamate--tRNA ligase (464 aa).

The 'HIGH' region motif lies at 9–19; it reads PSPTGYLHIGG. The short motif at 242-246 is the 'KMSKS' region element; that stretch reads KISKR. Lysine 245 contacts ATP.

The protein belongs to the class-I aminoacyl-tRNA synthetase family. Glutamate--tRNA ligase type 1 subfamily. In terms of assembly, monomer.

Its subcellular location is the cytoplasm. The enzyme catalyses tRNA(Glu) + L-glutamate + ATP = L-glutamyl-tRNA(Glu) + AMP + diphosphate. Catalyzes the attachment of glutamate to tRNA(Glu) in a two-step reaction: glutamate is first activated by ATP to form Glu-AMP and then transferred to the acceptor end of tRNA(Glu). The polypeptide is Glutamate--tRNA ligase (Neisseria gonorrhoeae (strain ATCC 700825 / FA 1090)).